The primary structure comprises 419 residues: MSGATLLKESGPKEVFCGLTSIVWLHRRMPDAFFLVVGSRTCAHLIQSAAGVMIFAEPRFGTAILEERDLAGLADAHDELNRVVKNLLARRPEIKTLFLVGSCPSEVIKIDLSRVAENLNIELKGQVTVLNYSGSGIETTFTQGEDGALKALIPLMPKSDQKKLLLVGTLANAVEDRLVSIFNRLGIDNVESFPPRQSTELPSIGPETKVLLTQPYLTDTARELKNKGAEIIEAPFPLGVTGSTLWIQAAANSFGIDKSIVDSILNPLISRAKKALEPHVEKLSGKKLFLLPESQLEIPLARFLSNECGMEIVEIGTPYLNRDLMKAEIDLLPPDCRIVEGQHVEKQLDRVRDSSPDLVVCGMGLANPLEAEGISTKWSIEMVFSPIHGIDQASDLAELFSRPLRRHDILNPTKTLTSN.

[4Fe-4S] cluster is bound by residues Cys17, Cys42, and Cys103.

Belongs to the BchN/ChlN family. Protochlorophyllide reductase is composed of three subunits; ChlL, ChlN and ChlB. Forms a heterotetramer of two ChlB and two ChlN subunits. Requires [4Fe-4S] cluster as cofactor.

It carries out the reaction chlorophyllide a + oxidized 2[4Fe-4S]-[ferredoxin] + 2 ADP + 2 phosphate = protochlorophyllide a + reduced 2[4Fe-4S]-[ferredoxin] + 2 ATP + 2 H2O. The protein operates within porphyrin-containing compound metabolism; chlorophyll biosynthesis (light-independent). In terms of biological role, component of the dark-operative protochlorophyllide reductase (DPOR) that uses Mg-ATP and reduced ferredoxin to reduce ring D of protochlorophyllide (Pchlide) to form chlorophyllide a (Chlide). This reaction is light-independent. The NB-protein (ChlN-ChlB) is the catalytic component of the complex. The protein is Light-independent protochlorophyllide reductase subunit N of Prochlorococcus marinus (strain NATL1A).